The primary structure comprises 1456 residues: Putative 1-phosphatidylinositol-3-phosphate 5-kinase FAB1D (1456 aa).

Residues 1-19 are compositionally biased toward low complexity; sequence MTPSNSLSSSERSLSGECS. Disordered stretches follow at residues 1 to 110, 533 to 592, 925 to 944, 967 to 987, 1003 to 1022, and 1137 to 1159; these read MTPS…EVDG, PVSV…NDIE, ENDNKVSDSGSNGGIDTPLV, VPEDNESQTLCSSSPDTTSPI, NGQEADKSIPVTGESLDDEV, and NNQDSKQTDRDVSRFSSESTNRL. Positions 43 to 57 are enriched in basic and acidic residues; sequence ELTKEVKVDRLERKS. Positions 86 to 110 are enriched in acidic residues; it reads REDDSDDVPVWEPPEPENPEDEVDG. The segment covering 533-544 has biased composition (low complexity); the sequence is PVSVDTDVSTTS. Residues 973–987 are compositionally biased toward polar residues; the sequence is SQTLCSSSPDTTSPI. Residues 1115 to 1443 enclose the PIPK domain; that stretch reads NNEESKKPLS…RFRKFMKTHF (329 aa). Polar residues predominate over residues 1150 to 1159; it reads RFSSESTNRL.

As to quaternary structure, component of the PI(3,5)P2 regulatory complex at least composed of ATG18, SAC/FIG4, FAB1 and VAC14. Requires Mg(2+) as cofactor. The cofactor is Mn(2+).

The enzyme catalyses a 1,2-diacyl-sn-glycero-3-phospho-(1D-myo-inositol-3-phosphate) + ATP = a 1,2-diacyl-sn-glycero-3-phospho-(1D-myo-inositol-3,5-bisphosphate) + ADP + H(+). Its function is as follows. The PI(3,5)P2 regulatory complex regulates both the synthesis and turnover of phosphatidylinositol 3,5-bisphosphate (PtdIns(3,5)P2). Catalyzes the phosphorylation of phosphatidylinositol 3-phosphate on the fifth hydroxyl of the myo-inositol ring, to form phosphatidylinositol 3,5-bisphosphate. The protein is Putative 1-phosphatidylinositol-3-phosphate 5-kinase FAB1D (FAB1D) of Arabidopsis thaliana (Mouse-ear cress).